The chain runs to 269 residues: Putative 6-phosphogluconolactonase (269 aa).

The disordered stretch occupies residues 248–269 (DAATGVPDRDSSDSDSPPPFDG).

The protein belongs to the glucosamine/galactosamine-6-phosphate isomerase family. 6-phosphogluconolactonase subfamily.

It is found in the nucleus. The catalysed reaction is 6-phospho-D-glucono-1,5-lactone + H2O = 6-phospho-D-gluconate + H(+). The protein operates within carbohydrate degradation; pentose phosphate pathway; D-ribulose 5-phosphate from D-glucose 6-phosphate (oxidative stage): step 2/3. Functionally, hydrolysis of 6-phosphogluconolactone to 6-phosphogluconate. This Caenorhabditis elegans protein is Putative 6-phosphogluconolactonase.